A 577-amino-acid polypeptide reads, in one-letter code: Arginine--tRNA ligase (577 aa).

Residues P122 to H132 carry the 'HIGH' region motif.

This sequence belongs to the class-I aminoacyl-tRNA synthetase family. Monomer.

The protein localises to the cytoplasm. It catalyses the reaction tRNA(Arg) + L-arginine + ATP = L-arginyl-tRNA(Arg) + AMP + diphosphate. This Escherichia coli O81 (strain ED1a) protein is Arginine--tRNA ligase.